Here is an 80-residue protein sequence, read N- to C-terminus: Defensin-like protein 207 (80 aa).

An N-terminal signal peptide occupies residues 1–29 (MAKNLNSVSFIVLLLVLLVASTEILKSDA). 3 cysteine pairs are disulfide-bonded: C38–C64, C50–C75, and C54–C77.

This sequence belongs to the DEFL family.

It is found in the secreted. This chain is Defensin-like protein 207, found in Arabidopsis thaliana (Mouse-ear cress).